Here is a 273-residue protein sequence, read N- to C-terminus: Methylthioribulose-1-phosphate dehydratase (273 aa).

The interval 1 to 27 (MCPTCPPSAASASSENNNTDNNDHLVL) is disordered. A substrate-binding site is contributed by C114. Zn(2+)-binding residues include H132 and H134. Residue E168 is the Proton donor/acceptor of the active site. Residue H225 coordinates Zn(2+).

It belongs to the aldolase class II family. MtnB subfamily. Requires Zn(2+) as cofactor.

It localises to the cytoplasm. It carries out the reaction 5-(methylsulfanyl)-D-ribulose 1-phosphate = 5-methylsulfanyl-2,3-dioxopentyl phosphate + H2O. The protein operates within amino-acid biosynthesis; L-methionine biosynthesis via salvage pathway; L-methionine from S-methyl-5-thio-alpha-D-ribose 1-phosphate: step 2/6. Catalyzes the dehydration of methylthioribulose-1-phosphate (MTRu-1-P) into 2,3-diketo-5-methylthiopentyl-1-phosphate (DK-MTP-1-P). This is Methylthioribulose-1-phosphate dehydratase from Sordaria macrospora (strain ATCC MYA-333 / DSM 997 / K(L3346) / K-hell).